The sequence spans 428 residues: Elongation factor 1-alpha (428 aa).

The region spanning 5-225 (KPVLNVAFIG…DKFQPPEKPT (221 aa)) is the tr-type G domain. The segment at 14-21 (GHVDAGKS) is G1. Position 14 to 21 (14 to 21 (GHVDAGKS)) interacts with GTP. Serine 21 contributes to the Mg(2+) binding site. A G2 region spans residues 70–74 (GVTID). Residues 91–94 (DCPG) are G3. Residues 91–95 (DCPGH) and 149–152 (NKMD) each bind GTP. The interval 149–152 (NKMD) is G4. The G5 stretch occupies residues 189–191 (ASL).

Belongs to the TRAFAC class translation factor GTPase superfamily. Classic translation factor GTPase family. EF-Tu/EF-1A subfamily.

It localises to the cytoplasm. The catalysed reaction is GTP + H2O = GDP + phosphate + H(+). GTP hydrolase that promotes the GTP-dependent binding of aminoacyl-tRNA to the A-site of ribosomes during protein biosynthesis. In Methanocaldococcus jannaschii (strain ATCC 43067 / DSM 2661 / JAL-1 / JCM 10045 / NBRC 100440) (Methanococcus jannaschii), this protein is Elongation factor 1-alpha.